We begin with the raw amino-acid sequence, 2435 residues long: MDSEAPTPTSSSFALPYAEPIAIVSAACRLPGHIQNPHQLWQFLQAGGIATSDVVPESRYNVAGHFDGSGRPGTLKTPGGMFIEDIDLGAFDAPFFHIGKSDAVSMDPQQRQLLEVVYECLENGGITMQGIDGDQIGCFVASYSADWHEMQSRHPASRAPGTTAGTSRAILSNRISHFFNIKGSSWTIDTACSGGLVGVDAACQYLRAGKLNGAIVAAAQLWMSPEYNEELGTMRAAASSTGRCHSFDAKADGYCRSEAVNAVYLKRLSDALRDGDPVRAVIRGTANNSDGRTPGLHSPNSDAQAAAIRAAYADAGIDSTQYTKTAFMECHATGTPAGDPSEVRGSASVLASMRPPSDPLIIGTIKSNLGHAEPGAGISGLMKAMMAVEKGIIPGNPTFITPNPNIDFAGLRVRASQRNMRWPQSTKDYRRASVASSGFGGSNAHVVLDNAEHYMQHHFLSVQPQFRTYVSSYAETGDVLSMLSGFGLGAANSSDKLAPLPNVLVFSAHDADSLKRQMGALSAHLVDPRVAIKLSDLSYTLSERRSRHFHRSFIVCRPNKGGNIETLPTDLAKYAMKPTSPVRIGFVFTGQGAQWSGMGADLIRLFPKTAKAVVDELDAALQELPADVRPSWSLLAELTEPRSSEHLREPEFSQPLVTALQLALLAVLKSWNVTADAVVGHSSGEIAAACSAGLLTPGQAILTAYFRGQAAKQVVMEGSMGMLAVGLGSAGVQKYLEDTSRAGKVVIACYNSPASVTLSGPTSLLSELAQVIQTDGHFARLLQVNLPYHSHYMSAIGDRYEKLLLDHGRLDEIQGETATRKIPMISSVSTIVLEGSKSCSAAYWKSNMVSAVQFDGACKRIVADQDLSANLLIEIGPSAALGGPIGQIIKQAGIDNVTYTSAAQRGTDSILALFGVAGQLFLHDCPVSLDHVNTDETALTEPKPAVIIDLPNYRWNHSTRYWHESLASKDWRFRNFPEHDLLGGKVLGTAWESPSWTKTLRLEDVPWLRDHKIGSEILFPASGYIAMAVEAARQATISTARSQNKAAPSAHAYHYVLRDVHFERGLVLEDETDTTLMLSLAPVARLGVKWWVFKVMSLASGGSSSSSDSWIEHSNGLVRLALNASEPLPRVTPDNYSLPLQYPTPARFWYKAFENAGYGYGPGFQKQSYIECTEGSFSARSTIMLNPPLSKWEPQPNYPLHPASMESCIQATLTSMYRGDRAGINNVLVPNAIDRIILSGDTWRSNEAVSVTTSESSSGITSKPLSNASLFDPTNGVLIIDLRGISMTSVGLQGNVCSFSTYTRVEWKPDICHLDSDTKIRRAILDLTDGTGDFVQEVLDLAAHKKPNMRVLEVDLTGGQPRSLWLSGNETSRITRAATSEFNYASDRPESVLSAQDLYSDMSSGYTSRFTLLPITSQSFVAPPELCRSDLVLIRTSQLPSMETASILTRNARCLLTEGGTIVLHVLDVSKYSKVGQESLREALSRGKFSKIRQAADGLFVAEATDADTAYSQGKSLVVLHFSTSPVFSWSSAVITSLIDKGWPITELTLEEGCRLTELPAKATILVMDEVNRPLFASMEEYQLEAIQSIVQRDCSLLWVTQGSQMHVSSPLKAICHGVFRSVRSMDPNARIVTLDVDSAAEDQLAKMADILHTVLLQVRVTPESLPADFEFVERGGLLYISRLRPAQVDNESRSDGDKDGLQPVPVDLHSTESTIGLVSGRPGILDTLHFAELGPGRLLVLGPEDIEVEIFAASVDDGDYALAKNLDPEDSTRLGYGGAGIVTRTGDSITDIRAGQRVALFHGGCVANRIVVARQVVFSVPDTMTFEDAATLPTAFVPAIYSIYHLAQLRQGQRVLIHSAANAVGIACVQLCQGLSCKPYVTVDSDEERKFLAEEVGVSSDHILLLNSENFAREMQDSAQNHGFDVIINTSQHHLPDQGWGVVSPGGVHVALGQTINDRSLLPMDYFTNNRSFCSLDIRTLPLDKLASPRACSQLSDLIYGSSIKHMLPKAVFPCHGVQAALQSCHDHNRLRNVVISTGPDKDVRILVKPEKQQPRCTFAPEQTYLLVGKLKGVSGSLALHLARCGAKYLVIMSPKNSENSENISRSIRAMGCSLRFFEGDAASIDDMRRCYGQISGPIGGIVHGAAAQSFRLMSHETYQATLARSVLSAWNLHTVSLERDDSVPFFIMLSSTAGVVGDEKQPHHAGSDVFHNALATYRCGLGLPSTSINLGPINDDALLPDSEKTFKTLSSGVWFGVNEAVFRRIIDHSLSREHHGAQRHFELASQAQIITGIAVPQPGSSDILHDVRLLGLKLAQSGNSSSAASGRDDSQNREMQTFLLCARSTNPDPAVLLSSAVGVLQAQFTKMLRLNELMDPAYPLNTYGMDSLAAAEPRSWVRTAFGVQLTTLDVVNAASLVVLCQKIISRMGLGKEV.

The Ketosynthase family 3 (KS3) domain maps to 18-450; sequence AEPIAIVSAA…GSNAHVVLDN (433 aa). Active-site for beta-ketoacyl synthase activity residues include Cys-192, His-331, and His-371. The segment at 586-883 is malonyl-CoA:ACP transacylase (MAT) domain; the sequence is FVFTGQGAQW…EIGPSAALGG (298 aa). Ser-682 (for malonyltransferase activity) is an active-site residue. Residues 979–1125 are N-terminal hotdog fold; sequence HDLLGGKVLG…GLVRLALNAS (147 aa). Residues 979–1291 form a dehydratase (DH) domain region; that stretch reads HDLLGGKVLG…LRGISMTSVG (313 aa). In terms of domain architecture, PKS/mFAS DH spans 979 to 1296; the sequence is HDLLGGKVLG…MTSVGLQGNV (318 aa). His-1011 functions as the For beta-hydroxyacyl dehydratase activity in the catalytic mechanism. Positions 1141 to 1296 are C-terminal hotdog fold; sequence QYPTPARFWY…MTSVGLQGNV (156 aa). The tract at residues 1724–2037 is enoylreductase (ER) domain; it reads GILDTLHFAE…DHNRLRNVVI (314 aa). A catalytic ketoreductase (KRc) domain region spans residues 2062 to 2301; sequence PEQTYLLVGK…ITGIAVPQPG (240 aa). Residues 2353-2429 enclose the Carrier domain; sequence VLLSSAVGVL…VLCQKIISRM (77 aa). Ser-2389 carries the post-translational modification O-(pantetheine 4'-phosphoryl)serine.

The protein operates within mycotoxin biosynthesis. Functionally, highly reducing polyketide synthase; part of the core atranone cluster (CAC) which products are predicted to catalyze most or all steps of mycotoxin atranone synthesis, starting from geranylgeranyl pyrophosphate (GGPP). The initial cyclization of GGPP to dolabellane is probably performed by the terpene cyclase ATR13. The Baeyer-Villiger oxidation near the end of the atranone synthesis, which converts atranones D and E to atranones F and G is predicted to be catalyzed by the monooxygenase ATR8. Of the CAC's other predicted gene products, the reducing PKS ATR6 might synthesize a polyketide chain. This polyketide is probably transferred onto the atranone backbone by the polyketide transferase ATR5. Other predicted CAC products include 4 oxygenases (ATR2, ATR3, ATR4, and ATR14), 3 short-chain reductases (ATR7, ATR9, and ATR10), and a methyltransferase (ATR12). These may all be involved in the various steps of atranone biosynthesis, although their specific roles must await experimental determination. The polypeptide is Highly reducing polyketide synthase ATR6 (Stachybotrys chlorohalonatus (strain IBT 40285)).